The following is a 522-amino-acid chain: Sugar transport protein MST2 (522 aa).

The Cytoplasmic portion of the chain corresponds to 1 to 24 (MAAATAADVAEDTASVYSGKLTLY). The chain crosses the membrane as a helical span at residues 25–45 (VFLTCGVAATGGLIIGYDIGI). Residues 46-82 (SGGVTSMDTFLGKFFPSVLHQEQTAQGTSQYCKFNSQ) are Extracellular-facing. A helical transmembrane segment spans residues 83-103 (PLTAFTSSLYLAALVASFFVA). At 104–111 (SFTRALGR) the chain is on the cytoplasmic side. The helical transmembrane segment at 112–132 (KWSMFGGGVSFLAGATLNGAA) threads the bilayer. Over 133 to 134 (RN) the chain is Extracellular. The chain crosses the membrane as a helical span at residues 135–155 (VAMLIVGRILLGIGVAFCGLS). Topologically, residues 156–169 (TPIYLSEMAPPRLR) are cytoplasmic. A helical membrane pass occupies residues 170-190 (GMLNIGLQLMITVGIFSANLV). Residues 191 to 204 (NYGAAKIRGGWGWR) are Extracellular-facing. The helical transmembrane segment at 205 to 225 (VSLGLAAAPACVIAVGSLFLP) threads the bilayer. Over 226–291 (DSPSSLINRG…DVLQRRYRPQ (66 aa)) the chain is Cytoplasmic. A helical membrane pass occupies residues 292–312 (LAMAVLIPFFQQLTGINVIMF). Residues 313 to 329 (YAPVLFKTIGLGGDASL) are Extracellular-facing. Residues 330-350 (MSAVITGLVNIVATFVSIATV) form a helical membrane-spanning segment. The Cytoplasmic portion of the chain corresponds to 351-361 (DSLGRRKLLFQ). A helical membrane pass occupies residues 362-382 (GGCQMLVSQVIIGTLIGVVFG). Residues 383 to 391 (TSGDGNISR) are Extracellular-facing. Residues 392–412 (ALAVCIVVFICVYVAGFAWSW) form a helical membrane-spanning segment. At 413–434 (GPLGVLLPSEIFPLEVRPAGQS) the chain is on the cytoplasmic side. Residues 435–455 (ISVAVNMLCTFAVAEAFLPML) traverse the membrane as a helical segment. The Extracellular portion of the chain corresponds to 456–459 (CHMR). A helical transmembrane segment spans residues 460–480 (FGLFYFFSGWVLVMTLFVSAF). Residues 481–522 (LPETKGVPIEKMTVVWRTHWFWGRFYCNQDADAHVQVANSKV) lie on the Cytoplasmic side of the membrane.

This sequence belongs to the major facilitator superfamily. Sugar transporter (TC 2.A.1.1) family.

It localises to the membrane. Functionally, mediates active uptake of hexoses by sugar:proton symport. Can transport glucose. The polypeptide is Sugar transport protein MST2 (Oryza sativa subsp. japonica (Rice)).